Reading from the N-terminus, the 537-residue chain is Fucosyltransferase 6 (537 aa).

The Cytoplasmic segment spans residues 1–20 (MYHIFQISSEVFRAFGLKMK). Residues 21-41 (ILLTLVFSGLLIWSVVLVSFS) form a helical; Signal-anchor for type II membrane protein membrane-spanning segment. The Lumenal portion of the chain corresponds to 42-537 (NDFNNQLLVA…NDGLKLFDEL (496 aa)). Residues N54, N231, and N378 are each glycosylated (N-linked (GlcNAc...) asparagine).

Belongs to the glycosyltransferase 37 family. In terms of tissue distribution, expressed in roots and flowers.

The protein localises to the golgi apparatus. The protein resides in the golgi stack membrane. It participates in protein modification; protein glycosylation. Functionally, may be involved in cell wall biosynthesis. May act as a fucosyltransferase. The polypeptide is Fucosyltransferase 6 (FUT6) (Arabidopsis thaliana (Mouse-ear cress)).